The primary structure comprises 200 residues: LIM domain-containing protein WLIM2a (200 aa).

2 consecutive LIM zinc-binding domains span residues Q8–E68 and D107–E167.

Interacts with F-actin. Expressed in roots, leaves, stems, flowers and siliques. Barely detected in pollen.

It localises to the cytoplasm. The protein localises to the cytoskeleton. In terms of biological role, binds to actin filaments and promotes cross-linking into thick bundles. Has an actin-stabilizing activity. The actin regulatory activities are not regulated by pH and [Ca(2+)]. The chain is LIM domain-containing protein WLIM2a from Arabidopsis thaliana (Mouse-ear cress).